Consider the following 77-residue polypeptide: Translation initiation factor IF-1, chloroplastic (77 aa).

The region spanning 1-71 (MKEQKLIHEG…TRGRIIYRLR (71 aa)) is the S1-like domain.

Belongs to the IF-1 family. In terms of assembly, component of the 30S ribosomal translation pre-initiation complex which assembles on the 30S ribosome in the order IF-2 and IF-3, IF-1 and N-formylmethionyl-tRNA(fMet); mRNA recruitment can occur at any time during PIC assembly.

The protein resides in the plastid. It is found in the chloroplast. In terms of biological role, one of the essential components for the initiation of protein synthesis. Stabilizes the binding of IF-2 and IF-3 on the 30S subunit to which N-formylmethionyl-tRNA(fMet) subsequently binds. Helps modulate mRNA selection, yielding the 30S pre-initiation complex (PIC). Upon addition of the 50S ribosomal subunit IF-1, IF-2 and IF-3 are released leaving the mature 70S translation initiation complex. The chain is Translation initiation factor IF-1, chloroplastic from Phalaenopsis aphrodite subsp. formosana (Moth orchid).